The following is a 518-amino-acid chain: Xaa-Pro aminopeptidase 3 (518 aa).

Residues 1-48 constitute a mitochondrion transit peptide; the sequence is MNNICKLNKFIISKSSSSLSSTSSKIKTNCLIKNAKMFSSSLNLNRFY. Residues Y314, D345, D356, H434, H441, E461, and E485 each coordinate substrate. D345, D356, and H434 together coordinate Mn(2+). E461 and E485 together coordinate Mn(2+).

The protein belongs to the peptidase M24B family. As to quaternary structure, homodimer. The cofactor is Mn(2+).

It is found in the mitochondrion. It localises to the cytoplasm. The catalysed reaction is Release of any N-terminal amino acid, including proline, that is linked to proline, even from a dipeptide or tripeptide.. Its function is as follows. Catalyzes the removal of a penultimate prolyl residue from the N-termini of peptides, such as Leu-Pro-Ala. Also shows low activity towards peptides with Ala or Ser at the P1 position. This is Xaa-Pro aminopeptidase 3 (xpnpep3) from Dictyostelium discoideum (Social amoeba).